We begin with the raw amino-acid sequence, 29 residues long: Cytochrome b6-f complex subunit 8 (29 aa).

The helical transmembrane segment at 3–23 (IVSLAWASLMVVFTFSLSLVV) threads the bilayer.

The protein belongs to the PetN family. In terms of assembly, the 4 large subunits of the cytochrome b6-f complex are cytochrome b6, subunit IV (17 kDa polypeptide, PetD), cytochrome f and the Rieske protein, while the 4 small subunits are PetG, PetL, PetM and PetN. The complex functions as a dimer.

It localises to the plastid. The protein localises to the chloroplast thylakoid membrane. Component of the cytochrome b6-f complex, which mediates electron transfer between photosystem II (PSII) and photosystem I (PSI), cyclic electron flow around PSI, and state transitions. This is Cytochrome b6-f complex subunit 8 from Coffea arabica (Arabian coffee).